Reading from the N-terminus, the 361-residue chain is sn-glycerol-3-phosphate import ATP-binding protein UgpC (361 aa).

In terms of domain architecture, ABC transporter spans 4–235 (LSLKGIRKSY…PETVFVAGFI (232 aa)). An ATP-binding site is contributed by 37–44 (GPSGCGKS).

The protein belongs to the ABC transporter superfamily. sn-glycerol-3-phosphate importer (TC 3.A.1.1.3) family. In terms of assembly, the complex is composed of two ATP-binding proteins (UgpC), two transmembrane proteins (UgpA and UgpE) and a solute-binding protein (UgpB).

It localises to the cell inner membrane. The catalysed reaction is sn-glycerol 3-phosphate(out) + ATP + H2O = sn-glycerol 3-phosphate(in) + ADP + phosphate + H(+). Part of the ABC transporter complex UgpBAEC involved in sn-glycerol-3-phosphate (G3P) import. Responsible for energy coupling to the transport system. This Burkholderia ambifaria (strain ATCC BAA-244 / DSM 16087 / CCUG 44356 / LMG 19182 / AMMD) (Burkholderia cepacia (strain AMMD)) protein is sn-glycerol-3-phosphate import ATP-binding protein UgpC.